We begin with the raw amino-acid sequence, 343 residues long: Glutamine synthetase (343 aa).

Positions 3-87 (FKAEYIWIDG…CEVLNIDLTP (85 aa)) constitute a GS beta-grasp domain. One can recognise a GS catalytic domain in the interval 92–343 (TRAALAEVAE…CSALEKAGQV (252 aa)). The Mg(2+) site is built by Glu113, Glu115, Glu174, and Glu181. Glu279 provides a ligand contact to L-glutamate.

It belongs to the glutamine synthetase family. Homooctamer and homotetramer. It depends on Mg(2+) as a cofactor.

The protein localises to the cytoplasm. It carries out the reaction L-glutamate + NH4(+) + ATP = L-glutamine + ADP + phosphate + H(+). Functionally, catalyzes the ATP-dependent biosynthesis of glutamine from glutamate and ammonia. This is Glutamine synthetase from Streptomyces viridochromogenes.